Consider the following 228-residue polypeptide: GDT1-like protein 5 (228 aa).

Position 2 is an N-acetylglycine (Gly-2). The next 6 helical transmembrane spans lie at 12-32 (LAMTFLSEIGDKTFFAAAILA), 39-59 (LVLAGCLSALIVMTILSATLG), 71-91 (THHITTFLFFGFGLWSLWDGF), 133-153 (PFLTAFFSPIFLKAFSINFFG), 173-193 (LGVVLGGIVAQTLCTTAAVLG), and 205-225 (IVALSGGMLFIIFGIQSLLTP).

This sequence belongs to the GDT1 family.

The protein localises to the membrane. The sequence is that of GDT1-like protein 5 from Arabidopsis thaliana (Mouse-ear cress).